A 235-amino-acid chain; its full sequence is Glucosamine-6-phosphate deaminase (235 aa).

D62 acts as the Proton acceptor; for enolization step in catalysis. Residue N128 is the For ring-opening step of the active site. The active-site Proton acceptor; for ring-opening step is H130. E135 acts as the For ring-opening step in catalysis.

The protein belongs to the glucosamine/galactosamine-6-phosphate isomerase family. NagB subfamily.

It carries out the reaction alpha-D-glucosamine 6-phosphate + H2O = beta-D-fructose 6-phosphate + NH4(+). It functions in the pathway amino-sugar metabolism; N-acetylneuraminate degradation; D-fructose 6-phosphate from N-acetylneuraminate: step 5/5. In terms of biological role, catalyzes the reversible isomerization-deamination of glucosamine 6-phosphate (GlcN6P) to form fructose 6-phosphate (Fru6P) and ammonium ion. The chain is Glucosamine-6-phosphate deaminase from Lactococcus lactis subsp. lactis (strain IL1403) (Streptococcus lactis).